The following is a 148-amino-acid chain: UPF0756 membrane protein Ent638_1667 (148 aa).

4 consecutive transmembrane segments (helical) span residues alanine 14–valine 34, leucine 51–leucine 71, leucine 86–methionine 106, and valine 121–valine 141.

Belongs to the UPF0756 family.

The protein resides in the cell membrane. The protein is UPF0756 membrane protein Ent638_1667 of Enterobacter sp. (strain 638).